The following is a 409-amino-acid chain: uncharacterized protein (409 aa).

The signal sequence occupies residues 1–39; it reads MVSDSKLELPLPVNQQKPRRRRILKVHLLIAALILSAVG. Zn(2+) contacts are provided by histidine 67, aspartate 69, glutamate 181, histidine 250, and histidine 271.

This sequence belongs to the metallo-dependent hydrolases superfamily. Peptidase M19 family. In terms of assembly, interacts with dil1. Zn(2+) is required as a cofactor.

It carries out the reaction an L-aminoacyl-L-amino acid + H2O = 2 an L-alpha-amino acid. This is an uncharacterized protein from Schizosaccharomyces pombe (strain 972 / ATCC 24843) (Fission yeast).